A 76-amino-acid chain; its full sequence is Small ribosomal subunit protein bS18 (76 aa).

This sequence belongs to the bacterial ribosomal protein bS18 family. Part of the 30S ribosomal subunit. Forms a tight heterodimer with protein bS6.

In terms of biological role, binds as a heterodimer with protein bS6 to the central domain of the 16S rRNA, where it helps stabilize the platform of the 30S subunit. The protein is Small ribosomal subunit protein bS18 of Pseudomonas entomophila (strain L48).